The chain runs to 200 residues: MLRIGLTGGIGSGKSTVADLLSAEGFLIIDADAIARDIVEPGQPALAELVEAFGEDILNPDGTLNRPGLAAKAFVSSEQTALLNSITHPRIAEETARRFAEAEAAGTKAAVYDMPLLVDKGLDRTMDLVVVVDVEEDERVRRLVAKRGLEEDDVRRRIASQVPDEIRLKAADIVIDNNGPVENLRAQADRLIAEILTRIK.

The DPCK domain occupies 3–200 (RIGLTGGIGS…LIAEILTRIK (198 aa)). 11–16 (GSGKST) is an ATP binding site.

The protein belongs to the CoaE family.

The protein localises to the cytoplasm. The enzyme catalyses 3'-dephospho-CoA + ATP = ADP + CoA + H(+). It functions in the pathway cofactor biosynthesis; coenzyme A biosynthesis; CoA from (R)-pantothenate: step 5/5. Catalyzes the phosphorylation of the 3'-hydroxyl group of dephosphocoenzyme A to form coenzyme A. The polypeptide is Dephospho-CoA kinase (Corynebacterium efficiens (strain DSM 44549 / YS-314 / AJ 12310 / JCM 11189 / NBRC 100395)).